The sequence spans 507 residues: Tyrosine protein-kinase src-2 (507 aa).

Residues methionine 1–proline 10 show a composition bias toward basic and acidic residues. The interval methionine 1–lysine 52 is disordered. Glycine 2 is lipidated: N-myristoyl glycine. Over residues isoleucine 35 to glycine 47 the composition is skewed to low complexity. The SH3 domain occupies serine 57–serine 118. In terms of domain architecture, SH2 spans tryptophan 124–cysteine 216. The 255-residue stretch at valine 240–asparagine 494 folds into the Protein kinase domain. Residues isoleucine 246 to valine 254 and lysine 268 each bind ATP. Aspartate 358 functions as the Proton acceptor in the catalytic mechanism. Phosphotyrosine is present on tyrosine 500.

The protein belongs to the protein kinase superfamily. Tyr protein kinase family. SRC subfamily. Mg(2+) serves as cofactor. The cofactor is Mn(2+). May be phosphorylated on Tyr-500 by csk-1. In terms of tissue distribution, expressed in vulva, cells around anus and pharyngeal muscles.

The enzyme catalyses L-tyrosyl-[protein] + ATP = O-phospho-L-tyrosyl-[protein] + ADP + H(+). Its activity is regulated as follows. May be inhibited by csk-1-mediated phosphorylation at Tyr-500. Non-receptor tyrosine-protein kinase which may play a role in larval and pharynx development. Unlike src-1, does not play a role in embryonic development. This chain is Tyrosine protein-kinase src-2, found in Caenorhabditis elegans.